The chain runs to 475 residues: MTTVRTGGAQTAEVPAGGRRDVPSGVKITALATGFVMATLDVTVVNVAGATIQESLDTTLTQLTWIVDGYVLTFASLLMLAGGLANRIGAKTVYLWGMGVFFLASLACALAPTAETLIAARLVQGAGAALFMPSSLSLLVFSFPEKRQRTRMLGLWSAIVATSSGLGPTVGGLMVSAFGWESIFLLNLPIGAIGMAMTYRYIAATESRATRLAVPGHLLWIVALAAVSFALIEGPQLGWTAGPVLTAYAVAVTAAALLALREHRVTNPVMPWQLFRGPGFTGANLVGFLFNFALFGSTFMLGLYFQHARGATPFQAGLELLPMTIFFPVANIVYARISARFSNGTLLTAFLLLAGAASLSMVTITASTPYWVVAVAVGVANIGAGIISPGMTAALVDAAGPENANVAGSVLNANRQIGSLVGIAAMGVVLHSTSDWDHGAAISFLAVGLAYLLGGLSAWRLIARPERRSAVTAAT.

14 consecutive transmembrane segments (helical) span residues 28 to 48 (ITALATGFVMATLDVTVVNVA), 65 to 85 (WIVDGYVLTFASLLMLAGGLA), 93 to 113 (VYLWGMGVFFLASLACALAPT), 123 to 143 (VQGAGAALFMPSSLSLLVFSF), 152 to 172 (MLGLWSAIVATSSGLGPTVGG), 173 to 193 (LMVSAFGWESIFLLNLPIGAI), 212 to 232 (LAVPGHLLWIVALAAVSFALI), 240 to 260 (TAGPVLTAYAVAVTAAALLAL), 285 to 305 (LVGFLFNFALFGSTFMLGLYF), 314 to 334 (FQAGLELLPMTIFFPVANIVY), 346 to 366 (LLTAFLLLAGAASLSMVTITA), 371 to 391 (WVVAVAVGVANIGAGIISPGM), 416 to 436 (QIGSLVGIAAMGVVLHSTSDW), and 439 to 459 (GAAISFLAVGLAYLLGGLSAW).

Belongs to the major facilitator superfamily.

It localises to the cell membrane. Resistance to the epoxide antibiotic methylenomycin A; probably by mediating its efflux. This Streptomyces coelicolor (strain ATCC BAA-471 / A3(2) / M145) protein is Methylenomycin A resistance protein (mmr).